The following is a 252-amino-acid chain: tRNA pseudouridine synthase A (252 aa).

Asp52 functions as the Nucleophile in the catalytic mechanism. Tyr110 is a substrate binding site.

The protein belongs to the tRNA pseudouridine synthase TruA family. In terms of assembly, homodimer.

The enzyme catalyses uridine(38/39/40) in tRNA = pseudouridine(38/39/40) in tRNA. Its function is as follows. Formation of pseudouridine at positions 38, 39 and 40 in the anticodon stem and loop of transfer RNAs. In Syntrophotalea carbinolica (strain DSM 2380 / NBRC 103641 / GraBd1) (Pelobacter carbinolicus), this protein is tRNA pseudouridine synthase A.